Reading from the N-terminus, the 569-residue chain is Endonuclease/exonuclease/phosphatase family domain-containing protein 1 (569 aa).

Positions 1-20 (MGSTLGCHRSIPRDPSDLSH) are disordered. Glycine 2 carries the N-myristoyl glycine lipid modification. A compositionally biased stretch (basic and acidic residues) spans 11–20 (IPRDPSDLSH). Residues serine 16, serine 21, and serine 25 each carry the phosphoserine modification. The 30-residue stretch at 38–67 (ERLNINTATEEELMTLPGVTRAVARSIVEY) folds into the HhH domain. Residues serine 106, serine 110, serine 160, and serine 173 each carry the phosphoserine modification. The interval 200-224 (SRPPSTHTNGGLTFTAKPHPSPTSL) is disordered. Positions 202-211 (PPSTHTNGGL) are enriched in polar residues. Threonine 265 carries the phosphothreonine modification. The tract at residues 548–569 (EVPRNGNGVTLEPSEANVKHER) is disordered.

In Rattus norvegicus (Rat), this protein is Endonuclease/exonuclease/phosphatase family domain-containing protein 1 (Eepd1).